We begin with the raw amino-acid sequence, 377 residues long: Alkane 1-monooxygenase 2 (377 aa).

Transmembrane regions (helical) follow at residues 17–37 (GYWI…WSLG), 43–63 (AWPW…DAIV), 87–107 (VLSL…GWIL), and 116–136 (VGQL…GITV). Positions 138, 142, 168, 172, and 173 each coordinate Fe cation. A helical transmembrane segment spans residues 236–256 (ALFLLGFSLAFGWLGAIFFLG). The Fe cation site is built by H312, H315, and H316.

Belongs to the fatty acid desaturase type 1 family. AlkB subfamily. Requires Fe(3+) as cofactor.

It localises to the cell inner membrane. It carries out the reaction octane + 2 reduced [rubredoxin] + O2 + 2 H(+) = 2 oxidized [rubredoxin] + octan-1-ol + H2O. Its pathway is hydrocarbon metabolism; alkane degradation. Functionally, catalyzes the hydroxylation of n-alkanes in the presence of a NADH-rubredoxin reductase and rubredoxin. It preferably hydroxylases C12-C20 hydrocarbons. The chain is Alkane 1-monooxygenase 2 (alkB2) from Pseudomonas aeruginosa (strain ATCC 15692 / DSM 22644 / CIP 104116 / JCM 14847 / LMG 12228 / 1C / PRS 101 / PAO1).